The chain runs to 66 residues: Alpha-conotoxin Vc1a (66 aa).

Residues methionine 1 to glycine 25 form the signal peptide. Residues arginine 26–lysine 47 constitute a propeptide that is removed on maturation. Disulfide bonds link cysteine 51-cysteine 57 and cysteine 52-cysteine 65. A ser-Xaa-Pro motif, crucial for potent interaction with nAChR region spans residues serine 53–proline 55. Key region for inhibition of alpha-9-alpha-10/CHRNA9-CHRNA10 nAChR regions lie at residues aspartate 54–arginine 56 and aspartate 60–isoleucine 64. At proline 55 the chain carries 4-hydroxyproline. The residue at position 63 (glutamate 63) is a 4-carboxyglutamate. Cysteine 65 bears the Cysteine amide mark.

The protein belongs to the conotoxin A superfamily. Post-translationally, vc1.1 is described as having no post-translational modifications (except C-terminal amidation), whereas Vc1a contains a hydroxyproline at Pro-55 and a 4-carboxyglutamate at Glu-63 (and a C-terminal amidation). Hydroxylation of Pro-55 is not important for inhibition of alpha-9-alpha-10/CHRNA9-CHRNA10 nAChRs, since [P6O]Vc1.1 (Pro-55 hydroxylated) shows similar inhibition than native toxin (IC(50)=99.1 nM). In contrast, hydroxylation of Pro-55 seems to impair inhibition of HVA calcium channel currents, since [P6O]Vc1.1 has no effect on HVA calcium channel currents. In vivo, hydroxylation of Pro-55 seems to induce the loss of analgesic effects in rat models of neuropathic pain, since [P6O]Vc1.1 has no effect on mechanical allodynia. In terms of processing, gamma-carboxylation of Glu-63 is not important for inhibition of alpha-9-alpha-10/CHRNA9-CHRNA10 nAChRs, since [E14gamma]Vc1.1 (carboxyglutamate at Glu-63) shows similar inhibition than native toxin (IC(50)=65.3 nM). In contrast, gamma-carboxylation of Glu-63 seems to impair inhibition of HVA calcium channel currents, since [E14gamma]Vc1.1 has no effect on HVA calcium channel currents. Post-translationally, non-native isomers 'ribbon' (with disulfide connectivity C1-C4; C2-C3) and 'beads' (with disulfide connectivity C1-C2; C3-C4) of Vc1.1 also inhibit HVA calcium channel currents in rat DRG neurons (20-30% inhibition at 1 uM toxin). It has been shown that both reduced and alkylated Vc1.1 have no effect on HVA calcium channel currents. The observed activity can be attributed to specific isomers. [C3S]Vc1.1(1-8) mutant is C-terminally amidated. As to expression, expressed by the venom duct.

Its subcellular location is the secreted. Its function is as follows. Alpha-conotoxins act on postsynaptic membranes, they bind to the nicotinic acetylcholine receptors (nAChR) and thus inhibit them. This toxin (native toxin Vc1a; hydroxylated and gamma-carboxylated) blocks alpha-9-alpha-10/CHRNA9-CHRNA10 nAChRs (IC(50)=62.9 nM). In contrast to the non-post-translationally modified analog Vc1.1, Vc1a does not inhibit high voltage-activated (HVA) calcium channel currents. In vivo, in contrast to Vc1.1, Vc1a does not show analgesic effects in rat models of neuropathic pain. Functionally, the synthetic peptide Vc1.1 (a non-hydroxylated and non-gamma-carboxylated analog of Vc1a) has two types of targets. It blocks alpha-9-alpha-10/CHRNA9-CHRNA10 nAChRs (on rat receptors, IC(50)=19-109 nM) (with preference for rat over human receptors) and inhibits high voltage-activated (HVA) calcium channel (Cav2.2, Cav2.3) currents by acting on GABA(B) receptors (GABBR1 and GABBR2) (IC(50)=1.7 nM). It also shows moderate inhibition on alpha-6/alpha-3-beta-2-beta-3 (CHRNA6/CHRNA3-CHRNB2-CHRNB3) (IC(50)=140 nM) and alpha-6/alpha-3-beta-4 (CHRNA6/CHRNA3-CHRNB4) (IC(50)=980 nM). On alpha-9-alpha-10/CHRNA9-CHRNA10 nAChR, it most likely interacts with the alpha-10(+)/alpha-9(-)interface of the receptor. In vivo, it acts as a powerful analgesic in rat models of neuropathic pain. The chain is Alpha-conotoxin Vc1a from Conus victoriae (Queen Victoria cone).